A 260-amino-acid chain; its full sequence is Endonuclease NucS (260 aa).

Belongs to the NucS endonuclease family.

Its subcellular location is the cytoplasm. Its function is as follows. Cleaves both 3' and 5' ssDNA extremities of branched DNA structures. This Methanopyrus kandleri (strain AV19 / DSM 6324 / JCM 9639 / NBRC 100938) protein is Endonuclease NucS.